A 333-amino-acid polypeptide reads, in one-letter code: Nucleoid-associated protein YE1421 (333 aa).

It belongs to the YejK family.

It localises to the cytoplasm. The protein localises to the nucleoid. The polypeptide is Nucleoid-associated protein YE1421 (Yersinia enterocolitica serotype O:8 / biotype 1B (strain NCTC 13174 / 8081)).